The sequence spans 795 residues: Volume-regulated anion channel subunit LRRC8E (795 aa).

Topologically, residues 1–22 are cytoplasmic; it reads MIPVAEFKQFTEQQPAFKVLKP. Residues 23-43 traverse the membrane as a helical segment; it reads WWDVLAEYLTVAMLMIGVFGC. At 44-116 the chain is on the extracellular side; sequence TLQVTQDKII…YETALHWYAK (73 aa). A disulfide bridge connects residues Cys-54 and Cys-300. An N-linked (GlcNAc...) asparagine glycan is attached at Asn-63. The helical transmembrane segment at 117–137 threads the bilayer; sequence YFPYLVVIHTLIFMVCTSFWF. Residues 138–264 are Cytoplasmic-facing; that stretch reads KFPGTSSKIE…IRQTVLKVCK (127 aa). The chain crosses the membrane as a helical span at residues 265-285; that stretch reads FFAILVYNLIYVEKISFLVAC. The Extracellular segment spans residues 286-312; it reads RVETSEITGYASFCCNHTKAHLFSKLA. Asn-301 carries an N-linked (GlcNAc...) asparagine glycan. Residues 313 to 333 traverse the membrane as a helical segment; the sequence is FCYISFVCVYGITCLYTLYWL. Residues 334–795 lie on the Cytoplasmic side of the membrane; the sequence is FHRPLKEYSF…AEVREKMEEE (462 aa). LRR repeat units lie at residues 535 to 556, 558 to 578, 582 to 603, 605 to 626, 630 to 651, 653 to 674, 676 to 697, 699 to 720, 722 to 744, and 745 to 766; these read QLKV…TDVA, HLQR…NSLK, VLRE…IFSL, ALQE…LSFQ, KLVT…VRKL, SLEQ…LGQC, GLRL…LGLL, SLQH…LFFC, KLRT…AALQ, and ALSR…LGDC.

The protein belongs to the LRRC8 family. As to quaternary structure, heterohexamer; oligomerizes with other LRRC8 proteins (LRRC8A, LRRC8C, LRRC8D and/or LRRC8B) to form a heterohexamer. In vivo, the subunit composition may depend primarily on expression levels, and heterooligomeric channels containing various proportions of the different LRRC8 proteins may coexist.

It localises to the cell membrane. The protein resides in the endoplasmic reticulum membrane. It is found in the lysosome membrane. It catalyses the reaction chloride(in) = chloride(out). The catalysed reaction is iodide(out) = iodide(in). The enzyme catalyses taurine(out) = taurine(in). It carries out the reaction 2',3'-cGAMP(out) = 2',3'-cGAMP(in). Its function is as follows. Non-essential component of the volume-regulated anion channel (VRAC, also named VSOAC channel), an anion channel required to maintain a constant cell volume in response to extracellular or intracellular osmotic changes. The VRAC channel conducts iodide better than chloride and can also conduct organic osmolytes like taurine. Mediates efflux of amino acids, such as aspartate, in response to osmotic stress. The VRAC channel also mediates transport of immunoreactive cyclic dinucleotide GMP-AMP (2'-3'-cGAMP), an immune messenger produced in response to DNA virus in the cytosol. Channel activity requires LRRC8A plus at least one other family member (LRRC8B, LRRC8C, LRRC8D or LRRC8E); channel characteristics depend on the precise subunit composition. Also plays a role in lysosome homeostasis by forming functional lysosomal VRAC channels in response to low cytoplasmic ionic strength condition: lysosomal VRAC channels are necessary for the formation of large lysosome-derived vacuoles, which store and then expel excess water to maintain cytosolic water homeostasis. The sequence is that of Volume-regulated anion channel subunit LRRC8E from Mus musculus (Mouse).